A 446-amino-acid polypeptide reads, in one-letter code: UDP-N-acetylmuramoylalanine--D-glutamate ligase (446 aa).

ATP is bound at residue 116–122 (GSNGKTT).

It belongs to the MurCDEF family.

Its subcellular location is the cytoplasm. The catalysed reaction is UDP-N-acetyl-alpha-D-muramoyl-L-alanine + D-glutamate + ATP = UDP-N-acetyl-alpha-D-muramoyl-L-alanyl-D-glutamate + ADP + phosphate + H(+). It functions in the pathway cell wall biogenesis; peptidoglycan biosynthesis. Cell wall formation. Catalyzes the addition of glutamate to the nucleotide precursor UDP-N-acetylmuramoyl-L-alanine (UMA). The chain is UDP-N-acetylmuramoylalanine--D-glutamate ligase from Marinobacter nauticus (strain ATCC 700491 / DSM 11845 / VT8) (Marinobacter aquaeolei).